Reading from the N-terminus, the 432-residue chain is Adenylosuccinate synthetase (432 aa).

Residues 13 to 19 (GDEGKGK) and 41 to 43 (GHT) each bind GTP. Catalysis depends on D14, which acts as the Proton acceptor. Mg(2+) is bound by residues D14 and G41. IMP-binding positions include 14–17 (DEGK), 39–42 (NAGH), T130, R144, Q225, T240, and R304. H42 acts as the Proton donor in catalysis. Position 300–306 (300–306 (AVTGRPR)) interacts with substrate. Residues R306, 332–334 (KLD), and 415–417 (STG) contribute to the GTP site.

Belongs to the adenylosuccinate synthetase family. Homodimer. Requires Mg(2+) as cofactor.

The protein resides in the cytoplasm. The enzyme catalyses IMP + L-aspartate + GTP = N(6)-(1,2-dicarboxyethyl)-AMP + GDP + phosphate + 2 H(+). It participates in purine metabolism; AMP biosynthesis via de novo pathway; AMP from IMP: step 1/2. Its function is as follows. Plays an important role in the de novo pathway of purine nucleotide biosynthesis. Catalyzes the first committed step in the biosynthesis of AMP from IMP. In Actinobacillus pleuropneumoniae serotype 7 (strain AP76), this protein is Adenylosuccinate synthetase.